We begin with the raw amino-acid sequence, 495 residues long: OTU domain-containing protein CG3251 (495 aa).

The OTU domain occupies 29–150 (LFRKHMLGDA…MGHFETVLTM (122 aa)). The Tudor domain maps to 302–364 (NFKVGAKCQV…HPLPPDEFKA (63 aa)). Positions 375 to 389 (LHNSQMGRQSVQGDQ) are enriched in polar residues. The segment at 375-404 (LHNSQMGRQSVQGDQQGFVPDPMPGTAPSM) is disordered. Over residues 395–404 (DPMPGTAPSM) the composition is skewed to pro residues.

Putative OTU-type deubiquitinase. Catalytically inactive towards all diubiquitin molecules and long K48- and K63- linked ubiquitin chains in vitro. Potential modulator of apoptosis. In Drosophila melanogaster (Fruit fly), this protein is OTU domain-containing protein CG3251.